The following is a 138-amino-acid chain: Aspartate 1-decarboxylase (138 aa).

Ser25 (schiff-base intermediate with substrate; via pyruvic acid) is an active-site residue. Ser25 carries the post-translational modification Pyruvic acid (Ser). Thr57 lines the substrate pocket. Tyr58 (proton donor) is an active-site residue. 73–75 (GAA) provides a ligand contact to substrate. A disordered region spans residues 116–138 (ELGGDPAQVPDGSGLKNPRHPEA).

Belongs to the PanD family. Heterooctamer of four alpha and four beta subunits. Requires pyruvate as cofactor. Is synthesized initially as an inactive proenzyme, which is activated by self-cleavage at a specific serine bond to produce a beta-subunit with a hydroxyl group at its C-terminus and an alpha-subunit with a pyruvoyl group at its N-terminus.

Its subcellular location is the cytoplasm. It carries out the reaction L-aspartate + H(+) = beta-alanine + CO2. Its pathway is cofactor biosynthesis; (R)-pantothenate biosynthesis; beta-alanine from L-aspartate: step 1/1. Functionally, catalyzes the pyruvoyl-dependent decarboxylation of aspartate to produce beta-alanine. This Corynebacterium jeikeium (strain K411) protein is Aspartate 1-decarboxylase.